The following is a 148-amino-acid chain: Snaclec B4 (148 aa).

A signal peptide spans 1-24 (MGRIIFVSFGLLVVFLSLSGTGAA). Intrachain disulfides connect Cys27–Cys38, Cys55–Cys144, and Cys121–Cys136. The C-type lectin domain maps to 34 to 145 (YDQHCYKVFD…CRLLGHFVCK (112 aa)).

Belongs to the snaclec family. As to quaternary structure, heterodimer; disulfide-linked. Expressed by the venom gland.

Its subcellular location is the secreted. In terms of biological role, interferes with one step of hemostasis (modulation of platelet aggregation, or coagulation cascade, for example). This is Snaclec B4 from Macrovipera lebetinus (Levantine viper).